We begin with the raw amino-acid sequence, 314 residues long: Tudor-interacting repair regulator protein (314 aa).

Gly2 carries the N-myristoyl glycine lipid modification.

It belongs to the Nudix hydrolase family. TIRR subfamily. In terms of assembly, interacts (via the cytoplasmic part) with syndecan-4 (SDC4), but not with other syndecan proteins. In terms of processing, myristoylated in vitro; additional evidence is however required to confirm myristoylation in vivo. As to expression, ubiquitously expressed. Expressed in embryonic brain, eyes, gizzard, heart, intestine, kidney, liver, tibia and skin.

The protein resides in the nucleus. It is found in the cytoplasm. The protein localises to the cytoskeleton. It localises to the cell membrane. Its subcellular location is the cell junction. The protein resides in the focal adhesion. Functionally, key regulator of TP53BP1 required to stabilize TP53BP1 and regulate its recruitment to chromatin. This chain is Tudor-interacting repair regulator protein (NUDT16L1), found in Gallus gallus (Chicken).